A 144-amino-acid polypeptide reads, in one-letter code: Bradykinin-potentiating and C-type natriuretic peptides isoform 2 (144 aa).

The signal sequence occupies residues 1–23; that stretch reads MVLSRLAASGLLLLALLALSVDG. The propeptide occupies 24 to 30; the sequence is KPVQQWA. The residue at position 31 (Q31) is a Pyrrolidone carboxylic acid. Residues 41–47 constitute a propeptide that is removed on maturation; sequence LLVQQWA. Q48 carries the post-translational modification Pyrrolidone carboxylic acid. The propeptide occupies 61 to 67; it reads LTVQQWA. Residue Q68 is modified to Pyrrolidone carboxylic acid. A propeptide spanning residues 78–84 is cleaved from the precursor; it reads LTVQQWA. Residues 81 to 110 form a disordered region; it reads QQWAQGRPPGPPIPPLTVQQWAQARPPHPP. Q85 carries the post-translational modification Pyrrolidone carboxylic acid. Residues 96–102 constitute a propeptide that is removed on maturation; that stretch reads LTVQQWA. A Pyrrolidone carboxylic acid modification is found at Q103. A propeptide spanning residues 114 to 116 is cleaved from the precursor; sequence APL. Q117 carries the pyrrolidone carboxylic acid modification. V122 is a propeptide. A Pyrrolidone carboxylic acid modification is found at Q123. Residues 128-144 constitute a propeptide that is removed on maturation; the sequence is VQKWAPVQKWAPLLQPT.

It in the N-terminal section; belongs to the bradykinin-potentiating peptide family. As to expression, expressed by venom gland.

The protein localises to the secreted. The protein resides in the cytoplasm. It is found in the cytosol. Functionally, peptide with several activities. It inhibits the activity of the angiotensin-converting enzyme (ACE) by a preferential interaction with its C-domain. It evokes transient hypotension (-14 mmHg) similar to that evoked by 0.5 ug of bradykinin, when injected alone into rats. It has a high bradykinin-potentiating effect (120%), when 60 nmol of BPP-10c are coinjected with 0.5 ug of bradykinin into rats. Does not affect angiotensin-1 pressor effects. Shows potent and long-lasting antihypertensive activity as well as a reduction of the heart rate. It also binds and dose-dependently promotes the activation of cytosolic argininosuccinate synthase (ASS1), an enzyme that catalyzes the conversion of citrulline, L-aspartate and ATP to argininosuccinate, AMP and pyrophosphate. It also enhances ASS1-dependent arginine production in HEK 293 cells, as well as in spontaneous hypertensive rat (SHR) and Wistar rat plasma. In addition, it induces the production of nitric-oxide (NO) by HUVEC cells via the endothelial nitric-oxide synthase (NOS3), which use arginine as a substrate and produce NO. It has been shown to be internalized by ASS1-expressing endothelial (HUVEC) and kidney (HEK 293) cells, and is detected homogenously distributed within the cell cytoplasm for up to 2 hours. In terms of biological role, acts as indirect hypotensive agent. Increases leukocyte rolling flux and adhesion by five-fold in post-capillary venules, without any increments in vasodilation of arterioles. Acts as indirect hypotensive agent. Potently induces vasodilation of arterioles, with only a small increase in leukocyte rolling flux. In Bothrops jararacussu (Jararacussu), this protein is Bradykinin-potentiating and C-type natriuretic peptides isoform 2.